The following is a 314-amino-acid chain: Olfactory receptor 1E16 (314 aa).

At 1–29 the chain is on the extracellular side; that stretch reads MTERNKTVISQFLLLGLPIPPEHQQLFYA. N-linked (GlcNAc...) asparagine glycosylation occurs at N5. Residues 30-50 form a helical membrane-spanning segment; that stretch reads LFLVMYLTTVLGNLIIIILII. The Cytoplasmic segment spans residues 51–57; that stretch reads LDSHLHT. Residues 58–78 traverse the membrane as a helical segment; sequence PMYLFLSNLSFSDLCFSSVTM. Residues 79-97 are Extracellular-facing; sequence PKLLQNMQSQVPSIPYAGC. C97 and C179 are oxidised to a cystine. Residues 98–118 traverse the membrane as a helical segment; the sequence is LAQIYFFLFFGDLGNFLLVAM. Residues 119 to 143 are Cytoplasmic-facing; it reads AYDRYVAICYPLHYTTIMSPRLCVS. Residues 144–164 form a helical membrane-spanning segment; sequence LVVLSWVLTTFHAMLHTLLMA. Residues 165 to 196 are Extracellular-facing; sequence RLSFCEDNVIPHYFCDMSALLKLACSDTRVNE. The chain crosses the membrane as a helical span at residues 197 to 217; it reads VVIFIVASIFLVLPFALITMS. The Cytoplasmic segment spans residues 218–239; sequence YVRIVSSILKVPSSQGIYKAFS. A helical membrane pass occupies residues 240–260; that stretch reads TCGSHLSVVSLFYGTVIGLYL. Residues 261–271 lie on the Extracellular side of the membrane; that stretch reads SPSSNNSTVKD. N265 and N266 each carry an N-linked (GlcNAc...) asparagine glycan. The helical transmembrane segment at 272–292 threads the bilayer; sequence TVMSLMYTVVTPMLNPFIYSL. Residues 293–314 are Cytoplasmic-facing; it reads RNRDIKGALERVFCKRKIQLNL.

This sequence belongs to the G-protein coupled receptor 1 family. In terms of tissue distribution, olfactory epithelium.

The protein localises to the cell membrane. Functionally, odorant receptor. Activated by a lily-derived aldehyde as well as other odorants. May signal through an inositol 1,4,5-trisphosphate (IP3) second messenger system. This Mus musculus (Mouse) protein is Olfactory receptor 1E16.